Reading from the N-terminus, the 51-residue chain is Insulin (51 aa).

3 disulfides stabilise this stretch: cysteine 8–cysteine 37, cysteine 20–cysteine 50, and cysteine 36–cysteine 41.

This sequence belongs to the insulin family. As to quaternary structure, heterodimer of a B chain and an A chain linked by two disulfide bonds.

It is found in the secreted. Insulin decreases blood glucose concentration. It increases cell permeability to monosaccharides, amino acids and fatty acids. It accelerates glycolysis, the pentose phosphate cycle, and glycogen synthesis in liver. This Seriola quinqueradiata (Five-ray yellowtail) protein is Insulin.